The chain runs to 204 residues: Phosphoribosyl-dephospho-CoA transferase (204 aa).

Residues D129 and D131 contribute to the active site.

Belongs to the MdcG family.

It carries out the reaction apo-[malonate decarboxylase ACP] + 2'-(5''-triphospho-alpha-D-ribosyl)-3'-dephospho-CoA = holo-[malonate decarboxylase ACP] + diphosphate. Transfers 2'-(5-triphosphoribosyl)-3'-dephosphocoenzyme-A to the apo-[acyl-carrier-protein] of the malonate decarboxylase to yield holo-[acyl-carrier-protein]. The chain is Phosphoribosyl-dephospho-CoA transferase from Pseudomonas putida (strain GB-1).